The primary structure comprises 304 residues: Phosphoribosylaminoimidazole-succinocarboxamide synthase (304 aa).

It belongs to the SAICAR synthetase family.

The catalysed reaction is 5-amino-1-(5-phospho-D-ribosyl)imidazole-4-carboxylate + L-aspartate + ATP = (2S)-2-[5-amino-1-(5-phospho-beta-D-ribosyl)imidazole-4-carboxamido]succinate + ADP + phosphate + 2 H(+). Its pathway is purine metabolism; IMP biosynthesis via de novo pathway; 5-amino-1-(5-phospho-D-ribosyl)imidazole-4-carboxamide from 5-amino-1-(5-phospho-D-ribosyl)imidazole-4-carboxylate: step 1/2. The chain is Phosphoribosylaminoimidazole-succinocarboxamide synthase (ADE1) from Komagataella pastoris (Yeast).